A 314-amino-acid chain; its full sequence is Ferrochelatase (314 aa).

Residues His-184 and Glu-259 each coordinate Fe cation.

Belongs to the ferrochelatase family.

It is found in the cytoplasm. It catalyses the reaction heme b + 2 H(+) = protoporphyrin IX + Fe(2+). It participates in porphyrin-containing compound metabolism; protoheme biosynthesis; protoheme from protoporphyrin-IX: step 1/1. Catalyzes the ferrous insertion into protoporphyrin IX. This is Ferrochelatase from Chlamydia trachomatis serovar A (strain ATCC VR-571B / DSM 19440 / HAR-13).